The primary structure comprises 196 residues: Holliday junction branch migration complex subunit RuvA (196 aa).

Positions 1-63 (MYDYIKGKLS…DDAHLLFGFH (63 aa)) are domain I. Residues 64–142 (TENEKEIFLN…EASGESATSR (79 aa)) are domain II. The tract at residues 143–148 (KVSSEQ) is flexible linker. Residues 148-196 (QNSNLEEAMEALLALGYKATELKKVKAFFEGTNETVEQYIKSSLKMLMK) are domain III.

The protein belongs to the RuvA family. In terms of assembly, homotetramer. Forms an RuvA(8)-RuvB(12)-Holliday junction (HJ) complex. HJ DNA is sandwiched between 2 RuvA tetramers; dsDNA enters through RuvA and exits via RuvB. An RuvB hexamer assembles on each DNA strand where it exits the tetramer. Each RuvB hexamer is contacted by two RuvA subunits (via domain III) on 2 adjacent RuvB subunits; this complex drives branch migration. In the full resolvosome a probable DNA-RuvA(4)-RuvB(12)-RuvC(2) complex forms which resolves the HJ.

Its subcellular location is the cytoplasm. In terms of biological role, the RuvA-RuvB-RuvC complex processes Holliday junction (HJ) DNA during genetic recombination and DNA repair, while the RuvA-RuvB complex plays an important role in the rescue of blocked DNA replication forks via replication fork reversal (RFR). RuvA specifically binds to HJ cruciform DNA, conferring on it an open structure. The RuvB hexamer acts as an ATP-dependent pump, pulling dsDNA into and through the RuvAB complex. HJ branch migration allows RuvC to scan DNA until it finds its consensus sequence, where it cleaves and resolves the cruciform DNA. The protein is Holliday junction branch migration complex subunit RuvA of Streptococcus agalactiae serotype Ia (strain ATCC 27591 / A909 / CDC SS700).